A 332-amino-acid polypeptide reads, in one-letter code: Biotin synthase (332 aa).

Residues 51 to 279 (YKVQLASLLS…LSRVRLSAGR (229 aa)) enclose the Radical SAM core domain. Residues C66, C70, and C73 each contribute to the [4Fe-4S] cluster site. [2Fe-2S] cluster contacts are provided by C110, C142, C202, and R274.

This sequence belongs to the radical SAM superfamily. Biotin synthase family. Homodimer. Requires [4Fe-4S] cluster as cofactor. The cofactor is [2Fe-2S] cluster.

The enzyme catalyses (4R,5S)-dethiobiotin + (sulfur carrier)-SH + 2 reduced [2Fe-2S]-[ferredoxin] + 2 S-adenosyl-L-methionine = (sulfur carrier)-H + biotin + 2 5'-deoxyadenosine + 2 L-methionine + 2 oxidized [2Fe-2S]-[ferredoxin]. The protein operates within cofactor biosynthesis; biotin biosynthesis; biotin from 7,8-diaminononanoate: step 2/2. In terms of biological role, catalyzes the conversion of dethiobiotin (DTB) to biotin by the insertion of a sulfur atom into dethiobiotin via a radical-based mechanism. In Prochlorococcus marinus (strain MIT 9211), this protein is Biotin synthase.